Consider the following 374-residue polypeptide: N-acetyldiaminopimelate deacetylase (374 aa).

Aspartate 69 is a catalytic residue. The active-site Proton acceptor is the glutamate 128.

This sequence belongs to the peptidase M20A family. N-acetyldiaminopimelate deacetylase subfamily.

It catalyses the reaction N-acetyl-(2S,6S)-2,6-diaminopimelate + H2O = (2S,6S)-2,6-diaminopimelate + acetate. It participates in amino-acid biosynthesis; L-lysine biosynthesis via DAP pathway; LL-2,6-diaminopimelate from (S)-tetrahydrodipicolinate (acetylase route): step 3/3. Catalyzes the conversion of N-acetyl-diaminopimelate to diaminopimelate and acetate. This is N-acetyldiaminopimelate deacetylase from Bacillus velezensis (strain DSM 23117 / BGSC 10A6 / LMG 26770 / FZB42) (Bacillus amyloliquefaciens subsp. plantarum).